An 827-amino-acid chain; its full sequence is Carnosine synthase 1 (827 aa).

One can recognise an ATP-grasp domain in the interval 516-720 (GPPWPSTSLH…LLLASTMVAC (205 aa)). 542 to 611 (IYQVPLPGVM…MEFVEGTEHD (70 aa)) is an ATP binding site. The Mg(2+) site is built by Glu-677, Glu-689, and Asn-691. Mn(2+)-binding residues include Glu-677, Glu-689, and Asn-691.

In terms of assembly, homotetramer. Mg(2+) serves as cofactor. The cofactor is Mn(2+).

The catalysed reaction is beta-alanine + L-histidine + ATP = carnosine + ADP + phosphate + H(+). It carries out the reaction 4-aminobutanoate + L-histidine + ATP = L-homocarnosine + ADP + phosphate + H(+). In terms of biological role, catalyzes the synthesis of carnosine and homocarnosine. Carnosine is synthesized more efficiently than homocarnosine. The polypeptide is Carnosine synthase 1 (Mus musculus (Mouse)).